We begin with the raw amino-acid sequence, 44 residues long: Small ribosomal subunit protein eS7 (44 aa).

Positions 18-34 (KPTRKSRIKNKQKRPRS) are enriched in basic residues. Residues 18–44 (KPTRKSRIKNKQKRPRSRTLTAVHDAI) form a disordered region.

It belongs to the eukaryotic ribosomal protein eS7 family. Component of the small ribosomal subunit.

It is found in the cytoplasm. The protein localises to the cytoskeleton. Its subcellular location is the microtubule organizing center. It localises to the centrosome. The protein resides in the nucleus. Its function is as follows. Component of the small ribosomal subunit. The ribosome is a large ribonucleoprotein complex responsible for the synthesis of proteins in the cell. Required for rRNA maturation. This Salmo salar (Atlantic salmon) protein is Small ribosomal subunit protein eS7 (rps7).